The following is a 502-amino-acid chain: Probable cytochrome P450 6a23 (502 aa).

C445 contacts heme.

The protein belongs to the cytochrome P450 family. It depends on heme as a cofactor.

It localises to the endoplasmic reticulum membrane. The protein localises to the microsome membrane. May be involved in the metabolism of insect hormones and in the breakdown of synthetic insecticides. This is Probable cytochrome P450 6a23 (Cyp6a23) from Drosophila melanogaster (Fruit fly).